A 53-amino-acid chain; its full sequence is Sec-independent protein translocase protein TatA (53 aa).

Residues 1–21 form a helical membrane-spanning segment; that stretch reads MGMSFSHLLIVLLIIFVLFGA.

Belongs to the TatA/E family. In terms of assembly, the Tat system comprises two distinct complexes: a TatABC complex, containing multiple copies of TatA, TatB and TatC subunits, and a separate TatA complex, containing only TatA subunits. Substrates initially bind to the TatABC complex, which probably triggers association of the separate TatA complex to form the active translocon.

The protein localises to the cell inner membrane. Its function is as follows. Part of the twin-arginine translocation (Tat) system that transports large folded proteins containing a characteristic twin-arginine motif in their signal peptide across membranes. TatA could form the protein-conducting channel of the Tat system. The sequence is that of Sec-independent protein translocase protein TatA from Rickettsia akari (strain Hartford).